The chain runs to 256 residues: Putative transcription factor 001R (256 aa).

Transcription activation. The protein is Putative transcription factor 001R of Frog virus 3 (isolate Goorha) (FV-3).